A 133-amino-acid polypeptide reads, in one-letter code: Fatty acid-binding protein (133 aa).

It belongs to the calycin superfamily. Fatty-acid binding protein (FABP) family.

The chain is Fatty acid-binding protein from Clonorchis sinensis (Chinese liver fluke).